We begin with the raw amino-acid sequence, 427 residues long: Serine hydroxymethyltransferase (427 aa).

Residues Leu118 and 122–124 (GHL) contribute to the (6S)-5,6,7,8-tetrahydrofolate site. Lys227 is modified (N6-(pyridoxal phosphate)lysine). Residues Glu243 and 351-353 (SPF) contribute to the (6S)-5,6,7,8-tetrahydrofolate site.

Belongs to the SHMT family. Homodimer. Requires pyridoxal 5'-phosphate as cofactor.

The protein resides in the cytoplasm. The catalysed reaction is (6R)-5,10-methylene-5,6,7,8-tetrahydrofolate + glycine + H2O = (6S)-5,6,7,8-tetrahydrofolate + L-serine. It participates in one-carbon metabolism; tetrahydrofolate interconversion. It functions in the pathway amino-acid biosynthesis; glycine biosynthesis; glycine from L-serine: step 1/1. Catalyzes the reversible interconversion of serine and glycine with tetrahydrofolate (THF) serving as the one-carbon carrier. This reaction serves as the major source of one-carbon groups required for the biosynthesis of purines, thymidylate, methionine, and other important biomolecules. Also exhibits THF-independent aldolase activity toward beta-hydroxyamino acids, producing glycine and aldehydes, via a retro-aldol mechanism. The sequence is that of Serine hydroxymethyltransferase from Thermotoga maritima (strain ATCC 43589 / DSM 3109 / JCM 10099 / NBRC 100826 / MSB8).